We begin with the raw amino-acid sequence, 175 residues long: Ribosome maturation factor RimM (175 aa).

Residues 96–175 (EDEFYWRELF…RIEVDWDPGF (80 aa)) form the PRC barrel domain.

It belongs to the RimM family. Binds ribosomal protein uS19.

It is found in the cytoplasm. In terms of biological role, an accessory protein needed during the final step in the assembly of 30S ribosomal subunit, possibly for assembly of the head region. Essential for efficient processing of 16S rRNA. May be needed both before and after RbfA during the maturation of 16S rRNA. It has affinity for free ribosomal 30S subunits but not for 70S ribosomes. In Aliivibrio fischeri (strain ATCC 700601 / ES114) (Vibrio fischeri), this protein is Ribosome maturation factor RimM.